The following is a 542-amino-acid chain: Chaperonin GroEL 3 (542 aa).

ATP contacts are provided by residues 30 to 33 (TLGP), Lys-51, 87 to 91 (DGTTT), Gly-415, and Asp-494. The disordered stretch occupies residues 523 to 542 (KPKKKEPPMPAMPSDMGDYD).

It belongs to the chaperonin (HSP60) family. In terms of assembly, forms a cylinder of 14 subunits composed of two heptameric rings stacked back-to-back. Interacts with the co-chaperonin GroES.

The protein resides in the cytoplasm. The enzyme catalyses ATP + H2O + a folded polypeptide = ADP + phosphate + an unfolded polypeptide.. Its function is as follows. Together with its co-chaperonin GroES, plays an essential role in assisting protein folding. The GroEL-GroES system forms a nano-cage that allows encapsulation of the non-native substrate proteins and provides a physical environment optimized to promote and accelerate protein folding. The polypeptide is Chaperonin GroEL 3 (Syntrophus aciditrophicus (strain SB)).